We begin with the raw amino-acid sequence, 1616 residues long: Protein Shroom2 (1616 aa).

Positions 26 to 108 (LVEVQLSGGA…TLKLVVKRRS (83 aa)) constitute a PDZ domain. Disordered regions lie at residues 128-159 (ELAASPFTSTSGCPSWSGRHHASSSSHDLSSS) and 183-229 (HPSS…KADT). Residues 150 to 159 (SSSSHDLSSS) are compositionally biased toward low complexity. Composition is skewed to polar residues over residues 186–197 (SRLSVAKSNSSI) and 220–229 (PDHTLSKADT). The residue at position 231 (serine 231) is a Phosphoserine. Residues 247–259 (QGGRQAQAAGDPQ) show a composition bias toward low complexity. Disordered stretches follow at residues 247-475 (QGGR…SGWQ), 502-678 (GALE…PLAG), 695-790 (TSFK…SEDT), 802-869 (EETS…LPRR), 881-1100 (KEQR…PSPA), 1115-1184 (PSVF…LTDK), 1268-1302 (AEPEAPHRAQPAEPQPLGTQVPPEKDRCTSPPGLS), and 1363-1389 (QRRKLLPKIPSPRSTEERKEEPSVPAA). Residues 312-321 (SSPPPPPPPL) are compositionally biased toward pro residues. Serine 313 and serine 325 each carry phosphoserine. Low complexity predominate over residues 343–356 (AAAAQHFTALAQAQ). Over residues 358–370 (RGDRRPELTDRPW) the composition is skewed to basic and acidic residues. Low complexity predominate over residues 405–415 (SSRLQASLSSS). Serine 413 carries the phosphoserine modification. Positions 684–773 (LKEAQARVLR…SEPEKMNEVG (90 aa)) constitute an ASD1 domain. Composition is skewed to basic and acidic residues over residues 754-770 (FTAEQKLKSYSEPEKMN) and 821-830 (IPRDKPERPR). Over residues 842 to 854 (WSRTTSLGDSLNA) the composition is skewed to polar residues. 5 positions are modified to phosphoserine: serine 851, serine 897, serine 921, serine 922, and serine 924. Residue threonine 925 is modified to Phosphothreonine. Over residues 926 to 958 (DHYKQEASVELRRQAGDPGEPREELPSAVRAEE) the composition is skewed to basic and acidic residues. Position 974 is a phosphoserine (serine 974). The span at 975–994 (PGSQQHPPSQKAPNPPTFSE) shows a compositional bias: polar residues. Phosphoserine is present on residues serine 1036 and serine 1039. Basic and acidic residues predominate over residues 1068–1077 (PKREPRRYRA). The span at 1159–1176 (LRLQTATMETSRSPSPQF) shows a compositional bias: polar residues. 3 positions are modified to phosphoserine: serine 1171, serine 1173, and serine 1297. In terms of domain architecture, ASD2 spans 1317 to 1611 (EELAREIVGK…QLKCLLDSLQ (295 aa)).

Belongs to the shroom family. Interacts with F-actin. As to expression, abundant in retina and melanoma; also in brain, placenta, lung, kidney and pancreas.

It is found in the apical cell membrane. The protein localises to the cell junction. The protein resides in the tight junction. Its subcellular location is the cytoplasm. It localises to the cytoskeleton. In terms of biological role, may be involved in endothelial cell morphology changes during cell spreading. In the retinal pigment epithelium, may regulate the biogenesis of melanosomes and promote their association with the apical cell surface by inducing gamma-tubulin redistribution. The sequence is that of Protein Shroom2 (SHROOM2) from Homo sapiens (Human).